Reading from the N-terminus, the 324-residue chain is Anthranilate phosphoribosyltransferase (324 aa).

Residues Gly75, Gly78–Asp79, Thr83, Asn85–Thr88, Lys102–Gly110, and Ser114 each bind 5-phospho-alpha-D-ribose 1-diphosphate. Gly75 is a binding site for anthranilate. Ser87 contributes to the Mg(2+) binding site. Asn105 is a binding site for anthranilate. Residue Arg160 participates in anthranilate binding. 2 residues coordinate Mg(2+): Asp216 and Glu217.

It belongs to the anthranilate phosphoribosyltransferase family. As to quaternary structure, homodimer. It depends on Mg(2+) as a cofactor.

The enzyme catalyses N-(5-phospho-beta-D-ribosyl)anthranilate + diphosphate = 5-phospho-alpha-D-ribose 1-diphosphate + anthranilate. It functions in the pathway amino-acid biosynthesis; L-tryptophan biosynthesis; L-tryptophan from chorismate: step 2/5. Catalyzes the transfer of the phosphoribosyl group of 5-phosphorylribose-1-pyrophosphate (PRPP) to anthranilate to yield N-(5'-phosphoribosyl)-anthranilate (PRA). This Picrophilus torridus (strain ATCC 700027 / DSM 9790 / JCM 10055 / NBRC 100828 / KAW 2/3) protein is Anthranilate phosphoribosyltransferase.